Reading from the N-terminus, the 211-residue chain is Thiamine-phosphate synthase (211 aa).

4-amino-2-methyl-5-(diphosphooxymethyl)pyrimidine-binding positions include Q37–K41 and N69. Mg(2+) is bound by residues D70 and D89. Residue S108 participates in 4-amino-2-methyl-5-(diphosphooxymethyl)pyrimidine binding. T134–T136 is a binding site for 2-[(2R,5Z)-2-carboxy-4-methylthiazol-5(2H)-ylidene]ethyl phosphate. K137 lines the 4-amino-2-methyl-5-(diphosphooxymethyl)pyrimidine pocket. 2-[(2R,5Z)-2-carboxy-4-methylthiazol-5(2H)-ylidene]ethyl phosphate contacts are provided by residues G166 and V186–S187.

The protein belongs to the thiamine-phosphate synthase family. It depends on Mg(2+) as a cofactor.

The enzyme catalyses 2-[(2R,5Z)-2-carboxy-4-methylthiazol-5(2H)-ylidene]ethyl phosphate + 4-amino-2-methyl-5-(diphosphooxymethyl)pyrimidine + 2 H(+) = thiamine phosphate + CO2 + diphosphate. It carries out the reaction 2-(2-carboxy-4-methylthiazol-5-yl)ethyl phosphate + 4-amino-2-methyl-5-(diphosphooxymethyl)pyrimidine + 2 H(+) = thiamine phosphate + CO2 + diphosphate. The catalysed reaction is 4-methyl-5-(2-phosphooxyethyl)-thiazole + 4-amino-2-methyl-5-(diphosphooxymethyl)pyrimidine + H(+) = thiamine phosphate + diphosphate. The protein operates within cofactor biosynthesis; thiamine diphosphate biosynthesis; thiamine phosphate from 4-amino-2-methyl-5-diphosphomethylpyrimidine and 4-methyl-5-(2-phosphoethyl)-thiazole: step 1/1. Its function is as follows. Condenses 4-methyl-5-(beta-hydroxyethyl)thiazole monophosphate (THZ-P) and 2-methyl-4-amino-5-hydroxymethyl pyrimidine pyrophosphate (HMP-PP) to form thiamine monophosphate (TMP). The protein is Thiamine-phosphate synthase of Salmonella agona (strain SL483).